Reading from the N-terminus, the 130-residue chain is Small ribosomal subunit protein uS11 (130 aa).

Belongs to the universal ribosomal protein uS11 family. In terms of assembly, part of the 30S ribosomal subunit. Interacts with proteins S7 and S18. Binds to IF-3.

Its function is as follows. Located on the platform of the 30S subunit, it bridges several disparate RNA helices of the 16S rRNA. Forms part of the Shine-Dalgarno cleft in the 70S ribosome. The chain is Small ribosomal subunit protein uS11 from Campylobacter lari (strain RM2100 / D67 / ATCC BAA-1060).